The primary structure comprises 152 residues: Transcriptional regulator MraZ (152 aa).

SpoVT-AbrB domains are found at residues 5 to 52 (ASAI…PIHE) and 81 to 124 (AHEV…DEQS).

The protein belongs to the MraZ family. Forms oligomers.

It localises to the cytoplasm. The protein localises to the nucleoid. This Shewanella baltica (strain OS195) protein is Transcriptional regulator MraZ.